A 334-amino-acid polypeptide reads, in one-letter code: Large ribosomal subunit protein uL3 (334 aa).

Basic residues predominate over residues methionine 1–arginine 10. Residues methionine 1–alanine 21 form a disordered region.

Belongs to the universal ribosomal protein uL3 family. Part of the 50S ribosomal subunit. Forms a cluster with proteins L14 and L24e.

Functionally, one of the primary rRNA binding proteins, it binds directly near the 3'-end of the 23S rRNA, where it nucleates assembly of the 50S subunit. This chain is Large ribosomal subunit protein uL3, found in Methanococcus maripaludis (strain C5 / ATCC BAA-1333).